An 876-amino-acid chain; its full sequence is MEMKPKYDPREVEKGRYEEWVSNGYFKPSEDKSKEAYTIVIPPPNVTGKLHLGHAWDTTLQDIITRMKRMQGYDTLYLPGMDHAGIATQAKVEAKLNEQGISRHDLGREKFLQQAWDWKEEYATFIRQQWAKLGLGLDYSRERFTLDDGLSKAVRKVFVDLYNKGIIYRGERIINWDPKARTALSDIEVIHEDVQGAFYHFKYPYADGNGYIEIATTRPETMLGDTAIVVNPNDERYKDVIGKTVILPIVGRELPILADEYVDIEFGSGAMKVTPAHDPNDFEIGQRHQLENIIVMDEYGKMNDKADKYKGMDRFDCRNQLVKDLKEQDLVIKIEEHTHSVGHSERSGAIVEPYLSTQWFVKMKPLAQRALDNQNTKDRIDFFPGRFENTFNRWMEEIRDWTISRQLWWGHQIPAWYHKDTGEVFVGEEAPEDIENWIQDEDVLDTWFSSALWPFSTLGWPDTNADDFKRYYPTNALVTGYDIIFFWVARMIFQGLEFTDRRPFNDVLLHGLVRAEDGRKMSKSLGNGVDPMDVIDEYGADSLRYFLATGSSPGHDLRYSTEKVESVWNFINKIWNAARFSLMNIGEDFKVEDIDLSGNLSLADQWILTRLNETISTVTELSDKYEFGEVGRALYNFIWDEFCDWYIEMSKIPMNGEDESQKQTTRSVLSYVLDKIMKMLHPFMPFVTETIWQSLPHHGETIVKANWPTVDQALIFNESKQTMEQLVEIIKSVRQSRVEVNTPLSKAIPILIQTKDEKIKHTLMDNISYLHKFCNPSQLTIDTEIEIPEKAMTTVVVAGKVVLPLEGLIDMDKEIARLEKELDKLQSELDRVDKKLSNENFVNKAPEKIINEEKEKQQHYQEKYNGVKSRIEQLKA.

Positions 44-54 (PNVTGKLHLGH) match the 'HIGH' region motif. The 'KMSKS' region signature appears at 520–524 (KMSKS). ATP is bound at residue K523. Residues 805-876 (LEGLIDMDKE…VKSRIEQLKA (72 aa)) are a coiled coil.

The protein belongs to the class-I aminoacyl-tRNA synthetase family. ValS type 1 subfamily. Monomer.

The protein localises to the cytoplasm. It carries out the reaction tRNA(Val) + L-valine + ATP = L-valyl-tRNA(Val) + AMP + diphosphate. Functionally, catalyzes the attachment of valine to tRNA(Val). As ValRS can inadvertently accommodate and process structurally similar amino acids such as threonine, to avoid such errors, it has a 'posttransfer' editing activity that hydrolyzes mischarged Thr-tRNA(Val) in a tRNA-dependent manner. The polypeptide is Valine--tRNA ligase (Staphylococcus epidermidis (strain ATCC 35984 / DSM 28319 / BCRC 17069 / CCUG 31568 / BM 3577 / RP62A)).